A 307-amino-acid polypeptide reads, in one-letter code: Small ribosomal subunit biogenesis GTPase RsgA (307 aa).

Positions 82–240 (GRYGERIVVA…IADTPGLREV (159 aa)) constitute a CP-type G domain. Residues 131–134 (NKAD) and 182–190 (GPSGVGKSS) contribute to the GTP site. The Zn(2+) site is built by Cys-264, Cys-269, His-271, and Cys-277.

The protein belongs to the TRAFAC class YlqF/YawG GTPase family. RsgA subfamily. As to quaternary structure, monomer. Associates with 30S ribosomal subunit, binds 16S rRNA. It depends on Zn(2+) as a cofactor.

The protein localises to the cytoplasm. In terms of biological role, one of several proteins that assist in the late maturation steps of the functional core of the 30S ribosomal subunit. Helps release RbfA from mature subunits. May play a role in the assembly of ribosomal proteins into the subunit. Circularly permuted GTPase that catalyzes slow GTP hydrolysis, GTPase activity is stimulated by the 30S ribosomal subunit. This is Small ribosomal subunit biogenesis GTPase RsgA from Gemmatimonas aurantiaca (strain DSM 14586 / JCM 11422 / NBRC 100505 / T-27).